A 387-amino-acid polypeptide reads, in one-letter code: Na(+)/H(+) antiporter NhaA (387 aa).

The next 12 membrane-spanning stretches (helical) occupy residues 16-36 (AGGV…NSSI), 53-73 (IEHY…GLEL), 89-109 (LLPI…HMFF), 118-138 (GSGI…SLLG), 147-167 (VFLT…IAIF), 171-191 (GIDV…FILN), 197-217 (ILWP…HSGV), 220-240 (TITG…PDSI), 251-271 (PVAF…IIDS), 283-303 (IGIF…FCAI), 321-341 (VIGV…ITLL), and 354-374 (IAIM…LKMT).

The protein belongs to the NhaA Na(+)/H(+) (TC 2.A.33) antiporter family.

The protein localises to the cell inner membrane. The catalysed reaction is Na(+)(in) + 2 H(+)(out) = Na(+)(out) + 2 H(+)(in). Its function is as follows. Na(+)/H(+) antiporter that extrudes sodium in exchange for external protons. The chain is Na(+)/H(+) antiporter NhaA from Cytophaga hutchinsonii (strain ATCC 33406 / DSM 1761 / CIP 103989 / NBRC 15051 / NCIMB 9469 / D465).